A 451-amino-acid chain; its full sequence is Tubulin alpha-1A chain (451 aa).

The MREC motif signature appears at 1 to 4; it reads MREC. The GTP site is built by glutamine 11, glutamate 71, serine 140, glycine 144, threonine 145, threonine 179, asparagine 206, and asparagine 228. Residue glutamate 71 coordinates Mg(2+). The active site involves glutamate 254. A disordered region spans residues 432–451; that stretch reads YEEVGVDSVEGEGEEEGEEY. The residue at position 445 (glutamate 445) is a 5-glutamyl polyglutamate.

It belongs to the tubulin family. In terms of assembly, dimer of alpha and beta chains. A typical microtubule is a hollow water-filled tube with an outer diameter of 25 nm and an inner diameter of 15 nM. Alpha-beta heterodimers associate head-to-tail to form protofilaments running lengthwise along the microtubule wall with the beta-tubulin subunit facing the microtubule plus end conferring a structural polarity. Microtubules usually have 13 protofilaments but different protofilament numbers can be found in some organisms and specialized cells. Mg(2+) serves as cofactor. Some glutamate residues at the C-terminus are polyglycylated, resulting in polyglycine chains on the gamma-carboxyl group. Glycylation is mainly limited to tubulin incorporated into axonemes (cilia and flagella) whereas glutamylation is prevalent in neuronal cells, centrioles, axonemes, and the mitotic spindle. Both modifications can coexist on the same protein on adjacent residues, and lowering polyglycylation levels increases polyglutamylation, and reciprocally. The precise function of polyglycylation is still unclear. In terms of processing, some glutamate residues at the C-terminus are polyglutamylated, resulting in polyglutamate chains on the gamma-carboxyl group. Polyglutamylation plays a key role in microtubule severing by spastin (SPAST). SPAST preferentially recognizes and acts on microtubules decorated with short polyglutamate tails: severing activity by SPAST increases as the number of glutamates per tubulin rises from one to eight, but decreases beyond this glutamylation threshold. Post-translationally, undergoes a tyrosination/detyrosination cycle, the cyclic removal and re-addition of a C-terminal tyrosine residue by the enzymes tubulin tyrosine carboxypeptidase (MATCAP1, VASH1 or VASH2) and tubulin tyrosine ligase (TTL), respectively. Tyrosination promotes microtubule interaction with CAP-Gly microtubule plus-end tracking proteins. Tyrosinated tubulins regulate the initiation of dynein-driven motility. In terms of processing, detyrosination is involved in metaphase plate congression by guiding chromosomes during mitosis. Detyrosination increases microtubules-dependent mechanotransduction in dystrophic cardiac and skeletal muscle. In cardiomyocytes, detyrosinated microtubules are required to resist to contractile compression during contraction.

It localises to the cytoplasm. Its subcellular location is the cytoskeleton. It carries out the reaction GTP + H2O = GDP + phosphate + H(+). In terms of biological role, tubulin is the major constituent of microtubules, a cylinder consisting of laterally associated linear protofilaments composed of alpha- and beta-tubulin heterodimers. Microtubules grow by the addition of GTP-tubulin dimers to the microtubule end, where a stabilizing cap forms. Below the cap, tubulin dimers are in GDP-bound state, owing to GTPase activity of alpha-tubulin. The polypeptide is Tubulin alpha-1A chain (TUBA1A) (Gallus gallus (Chicken)).